We begin with the raw amino-acid sequence, 722 residues long: Ras and EF-hand domain-containing protein (722 aa).

EF-hand domains follow at residues 5–39 (DELSRLRALFHTFDSKSSGRLEKGQFSALCAELKV) and 39–74 (VSPSEAEDIFARLDSDKDSCITFEDFAMGFRGARGL). Residues 75–84 (HMPEGKKDVE) show a composition bias toward basic and acidic residues. A disordered region spans residues 75–109 (HMPEGKKDVEQGEPPKSPSTPDKEEKPEETSSPAW). Residues 156 to 335 (REIRLQSTEM…ANRKLHDSND (180 aa)) are a coiled coil. Polar residues predominate over residues 355 to 374 (INTSPGSTISRNSPKLTRCT). Disordered stretches follow at residues 355–384 (INTSPGSTISRNSPKLTRCTSPYDRSPRSS) and 439–491 (FHRS…SGAS). Positions 480 to 491 (SNPVSRSSSGAS) are enriched in low complexity. GTP contacts are provided by residues 532–537 (AVGKSS), 635–638 (NKAD), and 672–673 (AK).

Belongs to the small GTPase superfamily. Rab family. Homodimer.

The protein localises to the cytoplasm. It localises to the perinuclear region. Its function is as follows. Binds predominantly GDP, and also GTP. The protein is Ras and EF-hand domain-containing protein (rasef) of Xenopus tropicalis (Western clawed frog).